The sequence spans 613 residues: DNA repair and telomere maintenance protein nbs1 (613 aa).

Positions 23-86 constitute an FHA domain; it reads YIVGRNVSDD…FGTKVNEKVV (64 aa). BRCT domains are found at residues 107–186 and 228–302; these read FTIN…YLST and GFSC…KIII. Serine 355 is subject to Phosphoserine. 2 disordered regions span residues 381–428 and 546–613; these read KEPE…GQGK and TEVF…KFHF. Over residues 387 to 399 the composition is skewed to polar residues; that stretch reads LSNQSNNGSAQNK. Positions 400-409 are enriched in basic and acidic residues; sequence KSGDNSEKTK. The segment covering 574 to 592 has biased composition (low complexity); it reads SSDKSGKSSISKKSSNSFK. The short motif at 611–613 is the FxF/Y motif element; it reads FHF.

Belongs to the Nibrin family. Component of the MRN complex composed of two heterodimers rad32 and rad50 associated with a single nbs1. Interacts with (phosphorylated) ctp1/CtIP. Interacts (via FxF/Y motif) with tel1/atm.

It localises to the nucleus. The protein resides in the chromosome. It is found in the telomere. Component of the MRN complex, which plays a central role in double-strand break (DSB) repair, DNA recombination, maintenance of telomere integrity and meiosis. The MRN complex is involved in the repair of DNA double-strand breaks (DSBs) via homologous recombination (HR), an error-free mechanism which primarily occurs during S and G2 phases. The complex (1) mediates the end resection of damaged DNA, which generates proper single-stranded DNA, a key initial steps in HR, and is (2) required for the recruitment of other repair factors and efficient activation of tel1/atm upon DNA damage. The MRN complex possesses single-strand endonuclease activity and double-strand-specific 3'-5' exonuclease activity, which are provided by MRE11, to initiate end resection, which is required for single-strand invasion and recombination. Within the MRN complex, nbs1 acts as a protein-protein adapter, which specifically recognizes and binds phosphorylated proteins, promoting their recruitment to DNA damage sites. Recruits rad32 and rad50 components of the MRN complex to DSBs in response to DNA damage. Promotes the recruitment of tel1/atm to the DNA damage sites, activating tel1/atm function. Mediates the recruitment of phosphorylated ctp1/CtIP to DSBs, leading to cooperation between the MRN complex and ctp1/CtIP to initiate end resection. The sequence is that of DNA repair and telomere maintenance protein nbs1 from Schizosaccharomyces pombe (strain 972 / ATCC 24843) (Fission yeast).